We begin with the raw amino-acid sequence, 227 residues long: Ribose-5-phosphate isomerase A (227 aa).

Residues 28–31 (TGST), 85–88 (DGAD), and 98–101 (KGGG) each bind substrate. The Proton acceptor role is filled by glutamate 107. Residue lysine 125 coordinates substrate.

The protein belongs to the ribose 5-phosphate isomerase family. Homodimer.

It carries out the reaction aldehydo-D-ribose 5-phosphate = D-ribulose 5-phosphate. The protein operates within carbohydrate degradation; pentose phosphate pathway; D-ribose 5-phosphate from D-ribulose 5-phosphate (non-oxidative stage): step 1/1. Catalyzes the reversible conversion of ribose-5-phosphate to ribulose 5-phosphate. The sequence is that of Ribose-5-phosphate isomerase A from Limosilactobacillus reuteri (strain DSM 20016) (Lactobacillus reuteri).